We begin with the raw amino-acid sequence, 75 residues long: MSRILFVFLAVMAIFSTSFGQQCGLNEEFKSCGSCEPTCAKPRVTICTMECKIGCQCKSGYLRNGEGTCVLPEKC.

Positions 1-20 (MSRILFVFLAVMAIFSTSFG) are cleaved as a signal peptide. Disulfide bonds link cysteine 23–cysteine 55, cysteine 32–cysteine 51, cysteine 35–cysteine 47, cysteine 39–cysteine 75, and cysteine 57–cysteine 69. A TIL domain is found at 23–75 (CGLNEEFKSCGSCEPTCAKPRVTICTMECKIGCQCKSGYLRNGEGTCVLPEKC).

Belongs to the serine protease inhibitor-like (TIL domain-containing) family. May be O-glycosylated. As to expression, expressed by the venom gland (at protein level) and expressed in fat body.

Its subcellular location is the secreted. It is found in the target cell membrane. Its function is as follows. Antimicrobial venom serine protease inhibitor. Exhibits inhibitory activity against chymotrypsin (IC(50)=19.56 nM, Ki=15.24 nM) and microbial serine proteases, such as subtilisin A (IC(50)=6.57 nM, Ki=6.83 nM) and proteinase K (IC(50)=7.11 nM, Ki=7.02 nM). Has not activity against trypsin, plasmin, tPA, thrombin, factor Xa or elastase. Binds and inhibits Gram-positive bacteria (B.subtilis (MIC=29.45 uM), B.thuringiensis (MIC=91.03 uM)) and the entomopathogenic fungus B.bassiana (MIC=30.09 uM) but not to E.coli. The polypeptide is Venom serine protease inhibitor BiVSPI (Bombus ignitus (Bumblebee)).